The chain runs to 162 residues: Shikimate kinase (162 aa).

10–15 (GAGKST) is an ATP binding site. Serine 14 is a binding site for Mg(2+). Aspartate 28, arginine 52, and glycine 73 together coordinate substrate. Arginine 113 provides a ligand contact to ATP. Substrate is bound at residue arginine 129.

The protein belongs to the shikimate kinase family. In terms of assembly, monomer. Mg(2+) serves as cofactor.

The protein resides in the cytoplasm. It catalyses the reaction shikimate + ATP = 3-phosphoshikimate + ADP + H(+). It functions in the pathway metabolic intermediate biosynthesis; chorismate biosynthesis; chorismate from D-erythrose 4-phosphate and phosphoenolpyruvate: step 5/7. Catalyzes the specific phosphorylation of the 3-hydroxyl group of shikimic acid using ATP as a cosubstrate. The protein is Shikimate kinase of Lactococcus lactis subsp. cremoris (strain SK11).